A 299-amino-acid chain; its full sequence is ATP phosphoribosyltransferase (299 aa).

It belongs to the ATP phosphoribosyltransferase family. Long subfamily. Mg(2+) serves as cofactor.

It localises to the cytoplasm. It catalyses the reaction 1-(5-phospho-beta-D-ribosyl)-ATP + diphosphate = 5-phospho-alpha-D-ribose 1-diphosphate + ATP. Its pathway is amino-acid biosynthesis; L-histidine biosynthesis; L-histidine from 5-phospho-alpha-D-ribose 1-diphosphate: step 1/9. Feedback inhibited by histidine. Catalyzes the condensation of ATP and 5-phosphoribose 1-diphosphate to form N'-(5'-phosphoribosyl)-ATP (PR-ATP). Has a crucial role in the pathway because the rate of histidine biosynthesis seems to be controlled primarily by regulation of HisG enzymatic activity. The chain is ATP phosphoribosyltransferase from Shewanella frigidimarina (strain NCIMB 400).